We begin with the raw amino-acid sequence, 445 residues long: GRAM domain-containing protein 2B (445 aa).

An N-acetylmethionine modification is found at methionine 1. A disordered region spans residues 1–118 (MVKKRLSSSD…ERKKSSSSSQ (118 aa)). 2 stretches are compositionally biased toward polar residues: residues 18 to 44 (PSNS…SSEA) and 56 to 68 (KSPT…SSVE). Positions 82-93 (SKSSFDGSSLLS) are enriched in low complexity. Positions 94-112 (DKNDCKTESKTDSKTERKK) are enriched in basic and acidic residues. Positions 123-190 (MHFHKLFLDV…FSVTLIKKTK (68 aa)) constitute a GRAM domain. Residues 233–246 (TSVGNSPNPSSAEN) show a composition bias toward polar residues. The disordered stretch occupies residues 233-252 (TSVGNSPNPSSAENSFRADR). 3 positions are modified to phosphoserine: serine 238, serine 255, and serine 265. A disordered region spans residues 277–331 (DLEGYSSSGSQTPESENSRDFHVTESQTVLNVTKGETKPPRTDAHGSRAPDGKAK). Residues 281–291 (YSSSGSQTPES) show a composition bias toward polar residues. A compositionally biased stretch (basic and acidic residues) spans 311-330 (GETKPPRTDAHGSRAPDGKA).

The polypeptide is GRAM domain-containing protein 2B (Gramd2b) (Mus musculus (Mouse)).